A 215-amino-acid polypeptide reads, in one-letter code: Large ribosomal subunit protein uL3 (215 aa).

The interval 136 to 155 (GVSISHRSHGSTGQRQDPGK) is disordered. Q151 carries the post-translational modification N5-methylglutamine.

Belongs to the universal ribosomal protein uL3 family. In terms of assembly, part of the 50S ribosomal subunit. Forms a cluster with proteins L14 and L19. Post-translationally, methylated by PrmB.

Functionally, one of the primary rRNA binding proteins, it binds directly near the 3'-end of the 23S rRNA, where it nucleates assembly of the 50S subunit. This chain is Large ribosomal subunit protein uL3, found in Rickettsia conorii (strain ATCC VR-613 / Malish 7).